The following is a 358-amino-acid chain: tRNA-specific 2-thiouridylase MnmA (358 aa).

Residues 6-13 (AMSGGVDS) and Leu32 each bind ATP. Residue Cys101 is the Nucleophile of the active site. A disulfide bond links Cys101 and Cys193. Gly125 is a binding site for ATP. The interaction with tRNA stretch occupies residues 143 to 145 (KDQ). Cys193 (cysteine persulfide intermediate) is an active-site residue.

Belongs to the MnmA/TRMU family.

Its subcellular location is the cytoplasm. The enzyme catalyses S-sulfanyl-L-cysteinyl-[protein] + uridine(34) in tRNA + AH2 + ATP = 2-thiouridine(34) in tRNA + L-cysteinyl-[protein] + A + AMP + diphosphate + H(+). Functionally, catalyzes the 2-thiolation of uridine at the wobble position (U34) of tRNA, leading to the formation of s(2)U34. The polypeptide is tRNA-specific 2-thiouridylase MnmA (Mycolicibacterium paratuberculosis (strain ATCC BAA-968 / K-10) (Mycobacterium paratuberculosis)).